An 846-amino-acid polypeptide reads, in one-letter code: Envelope glycoprotein gp160 (846 aa).

Residues 1–21 (MSGKIQLLVAFLLTSACLIYC) form the signal peptide. At 22 to 671 (TKYVTVFYGV…LTSWIKYIQY (650 aa)) the chain is on the extracellular side. Residue Asn-36 is glycosylated (N-linked (GlcNAc...) asparagine; by host). Cys-43 and Cys-56 are oxidised to a cystine. N-linked (GlcNAc...) asparagine; by host glycans are attached at residues Asn-69, Asn-113, Asn-132, Asn-142, Asn-157, Asn-184, Asn-197, Asn-229, Asn-232, Asn-239, Asn-263, Asn-269, Asn-280, Asn-291, Asn-301, Asn-357, Asn-363, Asn-390, Asn-400, Asn-455, and Asn-458. 5 cysteine pairs are disulfide-bonded: Cys-100-Cys-205, Cys-107-Cys-196, Cys-112-Cys-154, Cys-218-Cys-248, and Cys-228-Cys-240. The segment at 112 to 153 (CNASTESAVATTSPSGPDMINDTDPCIQLNNCSGLREEDMVE) is V1. The tract at residues 154–196 (CQFNMTGLELDKKKQYSETWYSKDVVCESDNSTDRKRCYMNHC) is V2. Positions 296 to 329 (CRRPENKTVVPITLMSGRRFHSQKIINKKPRQAW) are V3. Cys-296 and Cys-330 are joined by a disulfide. Disulfide bonds link Cys-382–Cys-438 and Cys-389–Cys-411. The interval 389 to 411 (CNMTWFLNWVENKTGQQHNYVPC) is V4. The segment at 454 to 461 (DNRTNITF) is V5. The fusion peptide stretch occupies residues 504–524 (GVLVLGFLGFLTTAGAAMGAA). An immunosuppression region spans residues 567-583 (LQARVTAIEKYLADQAR). N-linked (GlcNAc...) asparagine; by host glycosylation is found at Asn-603, Asn-612, and Asn-628. The stretch at 616–643 (QEWEHKIRFLEANISESLEQAQIQQEKN) forms a coiled coil. The MPER; binding to GalCer stretch occupies residues 649 to 670 (KLNSWDVFGNWFDLTSWIKYIQ). A helical membrane pass occupies residues 672-692 (GVMIVVGIVALRIVIYVVQML). Over 693–846 (SRLRKGYRPV…IRQGAEIALL (154 aa)) the chain is Cytoplasmic. A YXXV motif; contains endocytosis signal motif is present at residues 699–702 (YRPV). Cys-765 is lipidated: S-palmitoyl cysteine; by host. A Di-leucine internalization motif motif is present at residues 845–846 (LL).

In terms of assembly, the mature envelope protein (Env) consists of a homotrimer of non-covalently associated gp120-gp41 heterodimers. The resulting complex protrudes from the virus surface as a spike. There seems to be as few as 10 spikes on the average virion. Interacts with human CD4, CCR5 and CXCR4, to form a P4HB/PDI-CD4-CXCR4-gp120 complex. Gp120 also interacts with the C-type lectins CD209/DC-SIGN and CLEC4M/DC-SIGNR (collectively referred to as DC-SIGN(R)). Gp120 and gp41 interact with GalCer. As to quaternary structure, the mature envelope protein (Env) consists of a homotrimer of non-covalently associated gp120-gp41 heterodimers. The resulting complex protrudes from the virus surface as a spike. There seems to be as few as 10 spikes on the average virion. Post-translationally, specific enzymatic cleavages in vivo yield mature proteins. Envelope glycoproteins are synthesized as an inactive precursor that is heavily N-glycosylated and processed likely by host cell furin in the Golgi to yield the mature SU and TM proteins. The cleavage site between SU and TM requires the minimal sequence [KR]-X-[KR]-R. Palmitoylation of the transmembrane protein and of Env polyprotein (prior to its proteolytic cleavage) is essential for their association with host cell membrane lipid rafts. Palmitoylation is therefore required for envelope trafficking to classical lipid rafts, but not for viral replication.

Its subcellular location is the virion membrane. It localises to the host cell membrane. The protein resides in the host endosome membrane. In terms of biological role, the surface protein gp120 (SU) attaches the virus to the host lymphoid cell by binding to the primary receptor CD4. This interaction induces a structural rearrangement creating a high affinity binding site for a chemokine coreceptor like CXCR4 and/or CCR5. This peculiar 2 stage receptor-interaction strategy allows gp120 to maintain the highly conserved coreceptor-binding site in a cryptic conformation, protected from neutralizing antibodies. Since CD4 also displays a binding site for the disulfide-isomerase P4HB/PDI, a P4HB/PDI-CD4-CXCR4-gp120 complex may form. In that complex, P4HB/PDI could reach and reduce gp120 disulfide bonds, causing major conformational changes in gp120. TXN, another PDI family member could also be involved in disulfide rearrangements in Env during fusion. These changes are transmitted to the transmembrane protein gp41 and are thought to activate its fusogenic potential by unmasking its fusion peptide. The surface protein gp120 is a ligand for CD209/DC-SIGN and CLEC4M/DC-SIGNR, which are respectively found on dendritic cells (DCs), and on endothelial cells of liver sinusoids and lymph node sinuses. These interactions allow capture of viral particles at mucosal surfaces by these cells and subsequent transmission to permissive cells. DCs are professional antigen presenting cells, critical for host immunity by inducing specific immune responses against a broad variety of pathogens. They act as sentinels in various tissues where they take up antigen, process it, and present it to T-cells following migration to lymphoid organs. HIV subverts the migration properties of dendritic cells to gain access to CD4+ T-cells in lymph nodes. Virus transmission to permissive T-cells occurs either in trans (without DCs infection, through viral capture and transmission), or in cis (following DCs productive infection, through the usual CD4-gp120 interaction), thereby inducing a robust infection. In trans infection, bound virions remain infectious over days and it is proposed that they are not degraded, but protected in non-lysosomal acidic organelles within the DCs close to the cell membrane thus contributing to the viral infectious potential during DCs' migration from the periphery to the lymphoid tissues. On arrival at lymphoid tissues, intact virions recycle back to DCs' cell surface allowing virus transmission to CD4+ T-cells. Virion capture also seems to lead to MHC-II-restricted viral antigen presentation, and probably to the activation of HIV-specific CD4+ cells. Functionally, the transmembrane protein gp41 (TM) acts as a class I viral fusion protein. Under the current model, the protein has at least 3 conformational states: pre-fusion native state, pre-hairpin intermediate state, and post-fusion hairpin state. During fusion of viral and target intracellular membranes, the coiled coil regions (heptad repeats) assume a trimer-of-hairpins structure, positioning the fusion peptide in close proximity to the C-terminal region of the ectodomain. The formation of this structure appears to drive apposition and subsequent fusion of viral and target cell membranes. Complete fusion occurs in host cell endosomes and is dynamin-dependent, however some lipid transfer might occur at the plasma membrane. The virus undergoes clathrin-dependent internalization long before endosomal fusion, thus minimizing the surface exposure of conserved viral epitopes during fusion and reducing the efficacy of inhibitors targeting these epitopes. Membranes fusion leads to delivery of the nucleocapsid into the cytoplasm. Its function is as follows. The envelope glycoprotein gp160 precursor down-modulates cell surface CD4 antigen by interacting with it in the endoplasmic reticulum and blocking its transport to the cell surface. In terms of biological role, the gp120-gp41 heterodimer seems to contribute to T-cell depletion during HIV-1 infection. The envelope glycoproteins expressed on the surface of infected cells induce apoptosis through an interaction with uninfected cells expressing the receptor (CD4) and the coreceptors CXCR4 or CCR5. This type of bystander killing may be obtained by at least three distinct mechanisms. First, the interaction between the 2 cells can induce cellular fusion followed by nuclear fusion within the syncytium. Syncytia are condemned to die from apoptosis. Second, the 2 interacting cells may not fuse entirely and simply exchange plasma membrane lipids, after a sort of hemifusion process, followed by rapid death. Third, it is possible that virus-infected cells, on the point of undergoing apoptosis, fuse with CD4-expressing cells, in which case apoptosis is rapidly transmitted from one cell to the other and thus occurs in a sort of contagious fashion. The gp120-gp41 heterodimer allows rapid transcytosis of the virus through CD4 negative cells such as simple epithelial monolayers of the intestinal, rectal and endocervical epithelial barriers. Both gp120 and gp41 specifically recognize glycosphingolipids galactosyl-ceramide (GalCer) or 3' sulfo-galactosyl-ceramide (GalS) present in the lipid rafts structures of epithelial cells. Binding to these alternative receptors allows the rapid transcytosis of the virus through the epithelial cells. This transcytotic vesicle-mediated transport of virions from the apical side to the basolateral side of the epithelial cells does not involve infection of the cells themselves. This Human immunodeficiency virus type 2 subtype A (isolate SBLISY) (HIV-2) protein is Envelope glycoprotein gp160 (env).